Reading from the N-terminus, the 276-residue chain is Protein TabB (276 aa).

It belongs to the transferase hexapeptide repeat family. Requires pyridoxal 5'-phosphate as cofactor.

This Pseudomonas amygdali pv. tabaci (Pseudomonas syringae pv. tabaci) protein is Protein TabB (tabB).